We begin with the raw amino-acid sequence, 58 residues long: uncharacterized protein (58 aa).

The helical transmembrane segment at 18 to 38 threads the bilayer; it reads WLMIVLLFCSTGMVFLATILE.

Its subcellular location is the membrane. This is an uncharacterized protein from Saccharomyces cerevisiae (strain ATCC 204508 / S288c) (Baker's yeast).